The chain runs to 275 residues: Large ribosomal subunit protein uL2 (275 aa).

The segment at 224–275 (AMNPVDHPHGGGEGKAPIGHPGPLTPWGKPALGYKTRKKGKASDKFIVKRRK) is disordered. A compositionally biased stretch (basic and acidic residues) spans 264-275 (KASDKFIVKRRK).

It belongs to the universal ribosomal protein uL2 family. As to quaternary structure, part of the 50S ribosomal subunit. Forms a bridge to the 30S subunit in the 70S ribosome.

Its function is as follows. One of the primary rRNA binding proteins. Required for association of the 30S and 50S subunits to form the 70S ribosome, for tRNA binding and peptide bond formation. It has been suggested to have peptidyltransferase activity; this is somewhat controversial. Makes several contacts with the 16S rRNA in the 70S ribosome. The polypeptide is Large ribosomal subunit protein uL2 (Caldanaerobacter subterraneus subsp. tengcongensis (strain DSM 15242 / JCM 11007 / NBRC 100824 / MB4) (Thermoanaerobacter tengcongensis)).